The primary structure comprises 183 residues: Myelin-associated oligodendrocyte basic protein (183 aa).

A disordered region spans residues 68-183 (TRTSRRAKSP…GSPVKASRFW (116 aa)). The segment covering 69 to 78 (RTSRRAKSPQ) has biased composition (basic residues). The segment covering 79-96 (RPKQQPAAPPAVVRAPAK) has biased composition (low complexity). 4 tandem repeats follow at residues 97 to 106 (PRSPPRSERQ), 107 to 116 (PRSPPRSERQ), 117 to 126 (PRSPPRSERQ), and 127 to 136 (PRSPPRSERQ). The segment at 97-136 (PRSPPRSERQPRSPPRSERQPRSPPRSERQPRSPPRSERQ) is 4 X 10 AA tandem repeats of P-R-S-P-P-R-S-E-R-Q. Phosphoserine is present on residues Ser-99 and Ser-109. Residues 101–143 (PRSERQPRSPPRSERQPRSPPRSERQPRSPPRSERQPRPRPEV) show a composition bias toward basic and acidic residues. A compositionally biased stretch (low complexity) spans 151–164 (RPPQKSKQQPRSSP).

It localises to the cytoplasm. It is found in the perinuclear region. Functionally, may play a role in compacting or stabilizing the myelin sheath, possibly by binding the negatively charged acidic phospholipids of the cytoplasmic membrane. In Homo sapiens (Human), this protein is Myelin-associated oligodendrocyte basic protein (MOBP).